A 350-amino-acid chain; its full sequence is Divinyl chlorophyll a/b light-harvesting protein PcbB (350 aa).

6 consecutive transmembrane segments (helical) span residues 27-47, 89-109, 141-161, 202-222, 244-264, and 305-325; these read FLAA…SFTL, IVVT…GGLM, FILG…VEWA, VMGG…WHIV, LSWA…WCAS, and LTNI…WHAL.

Belongs to the PsbB/PsbC family. IsiA/Pcb subfamily. In terms of assembly, the antenna complex consists of divinyl chlorophylls (a and b) and divinyl chlorophyll a/b binding proteins. Under iron-starvation forms a complex with PSI, consisting of a PSI trimer surrounded by a ring composed of 18 PcbB subunits. Requires divinyl chlorophyll a as cofactor. Divinyl chlorophyll b serves as cofactor.

Its subcellular location is the cellular thylakoid membrane. Functionally, the antenna complex functions as a light receptor, it captures and delivers excitation energy to photosystems I. The Prochlorales pcb genes are not related to higher plant LHCs. In Prochlorococcus marinus (strain MIT 9313), this protein is Divinyl chlorophyll a/b light-harvesting protein PcbB (pcbB).